A 232-amino-acid polypeptide reads, in one-letter code: MSDDSSDSTDAPGTSRSRDSGLTERQRTILDVIRASVTTRGYPPSIREIGDAVGLTSTSSVAHQLRTLERKGYLRRDANRPRAVDVRAADDHPTPIVATEVAGSDALPEPTFVPVLGRIAAGGPILAEEAVEDVFPLPRELVGEGSLFLLKVVGESMVDAAICDGDWVVVRQQSVADNGDIVAAMIDGEATVKTFKRTKGQVWLMPHNPAFDPIPGNDAAILGKVVTVIRKI.

The segment at 1–25 (MSDDSSDSTDAPGTSRSRDSGLTER) is disordered. Over residues 16 to 25 (RSRDSGLTER) the composition is skewed to basic and acidic residues. A DNA-binding region (H-T-H motif) is located at residues 46-66 (IREIGDAVGLTSTSSVAHQLR). Active-site for autocatalytic cleavage activity residues include Ser-156 and Lys-193.

It belongs to the peptidase S24 family. In terms of assembly, homodimer.

It catalyses the reaction Hydrolysis of Ala-|-Gly bond in repressor LexA.. Functionally, represses a number of genes involved in the response to DNA damage (SOS response), including recA and lexA. In the presence of single-stranded DNA, RecA interacts with LexA causing an autocatalytic cleavage which disrupts the DNA-binding part of LexA, leading to derepression of the SOS regulon and eventually DNA repair. The polypeptide is LexA repressor (Mycolicibacterium gilvum (strain PYR-GCK) (Mycobacterium gilvum (strain PYR-GCK))).